Here is a 186-residue protein sequence, read N- to C-terminus: Ribosome maturation factor RimM (186 aa).

The PRC barrel domain occupies 103 to 174 (PEEYHYSDLI…ELQVQPPPGL (72 aa)).

The protein belongs to the RimM family. As to quaternary structure, binds ribosomal protein uS19.

It localises to the cytoplasm. Functionally, an accessory protein needed during the final step in the assembly of 30S ribosomal subunit, possibly for assembly of the head region. Essential for efficient processing of 16S rRNA. May be needed both before and after RbfA during the maturation of 16S rRNA. It has affinity for free ribosomal 30S subunits but not for 70S ribosomes. This chain is Ribosome maturation factor RimM, found in Synechococcus sp. (strain JA-3-3Ab) (Cyanobacteria bacterium Yellowstone A-Prime).